A 258-amino-acid chain; its full sequence is UPF0246 protein ETA_07010 (258 aa).

It belongs to the UPF0246 family.

In Erwinia tasmaniensis (strain DSM 17950 / CFBP 7177 / CIP 109463 / NCPPB 4357 / Et1/99), this protein is UPF0246 protein ETA_07010.